A 192-amino-acid chain; its full sequence is Crossover junction endodeoxyribonuclease RuvC (192 aa).

Residues Asp8, Glu67, and Asp139 contribute to the active site. Mg(2+)-binding residues include Asp8, Glu67, and Asp139.

It belongs to the RuvC family. Homodimer which binds Holliday junction (HJ) DNA. The HJ becomes 2-fold symmetrical on binding to RuvC with unstacked arms; it has a different conformation from HJ DNA in complex with RuvA. In the full resolvosome a probable DNA-RuvA(4)-RuvB(12)-RuvC(2) complex forms which resolves the HJ. The cofactor is Mg(2+).

The protein resides in the cytoplasm. It catalyses the reaction Endonucleolytic cleavage at a junction such as a reciprocal single-stranded crossover between two homologous DNA duplexes (Holliday junction).. Functionally, the RuvA-RuvB-RuvC complex processes Holliday junction (HJ) DNA during genetic recombination and DNA repair. Endonuclease that resolves HJ intermediates. Cleaves cruciform DNA by making single-stranded nicks across the HJ at symmetrical positions within the homologous arms, yielding a 5'-phosphate and a 3'-hydroxyl group; requires a central core of homology in the junction. The consensus cleavage sequence is 5'-(A/T)TT(C/G)-3'. Cleavage occurs on the 3'-side of the TT dinucleotide at the point of strand exchange. HJ branch migration catalyzed by RuvA-RuvB allows RuvC to scan DNA until it finds its consensus sequence, where it cleaves and resolves the cruciform DNA. The chain is Crossover junction endodeoxyribonuclease RuvC from Haemophilus ducreyi (strain 35000HP / ATCC 700724).